We begin with the raw amino-acid sequence, 297 residues long: Iron-sulfur cluster assembly SufBD family protein ycf24 (297 aa).

The protein belongs to the iron-sulfur cluster assembly SufBD family.

The protein resides in the plastid. The protein localises to the chloroplast. The polypeptide is Iron-sulfur cluster assembly SufBD family protein ycf24 (ycf24) (Antithamnion sp. (Red alga)).